The sequence spans 1200 residues: Chromosome partition protein Smc (1200 aa).

Residue 33-40 (PNGSGKSN) coordinates ATP. The tract at residues 90 to 109 (GENLSEPGANHNGNGNGAKI) is disordered. A coiled-coil region spans residues 202-528 (EVQDREERCQ…AASQAQQEVQ (327 aa)). The 115-residue stretch at 542 to 656 (PGVCGLVAQL…VFDTLVNARN (115 aa)) folds into the SMC hinge domain. The stretch at 692 to 1046 (TMVSEDTAEV…ERTELLLRIE (355 aa)) forms a coiled coil.

The protein belongs to the SMC family. As to quaternary structure, homodimer.

It localises to the cytoplasm. In terms of biological role, required for chromosome condensation and partitioning. The chain is Chromosome partition protein Smc from Synechocystis sp. (strain ATCC 27184 / PCC 6803 / Kazusa).